Here is a 142-residue protein sequence, read N- to C-terminus: MLSPKRVKFRKMFKGRMTGLAHRGSDVSFGTYGLQALEPGWVTSRQIEACRVAMTRHIKRGGKVWIRIFPDKPITKKPAETRMGKGKGSPELWVAVVKPGRVMFEIEGVSKELAETAMSLAAAKLGVKTKFVAREEAVTHEG.

Belongs to the universal ribosomal protein uL16 family. As to quaternary structure, part of the 50S ribosomal subunit.

Its function is as follows. Binds 23S rRNA and is also seen to make contacts with the A and possibly P site tRNAs. This Gemmatimonas aurantiaca (strain DSM 14586 / JCM 11422 / NBRC 100505 / T-27) protein is Large ribosomal subunit protein uL16.